A 133-amino-acid polypeptide reads, in one-letter code: Large ribosomal subunit protein bL17 (133 aa).

It belongs to the bacterial ribosomal protein bL17 family. In terms of assembly, part of the 50S ribosomal subunit. Contacts protein L32.

The protein is Large ribosomal subunit protein bL17 of Alteromonas mediterranea (strain DSM 17117 / CIP 110805 / LMG 28347 / Deep ecotype).